The following is a 115-amino-acid chain: NAD(P)H-quinone oxidoreductase subunit M (115 aa).

The protein belongs to the complex I NdhM subunit family. As to quaternary structure, NDH-1 can be composed of about 15 different subunits; different subcomplexes with different compositions have been identified which probably have different functions.

It localises to the cellular thylakoid membrane. It carries out the reaction a plastoquinone + NADH + (n+1) H(+)(in) = a plastoquinol + NAD(+) + n H(+)(out). It catalyses the reaction a plastoquinone + NADPH + (n+1) H(+)(in) = a plastoquinol + NADP(+) + n H(+)(out). Functionally, NDH-1 shuttles electrons from an unknown electron donor, via FMN and iron-sulfur (Fe-S) centers, to quinones in the respiratory and/or the photosynthetic chain. The immediate electron acceptor for the enzyme in this species is believed to be plastoquinone. Couples the redox reaction to proton translocation, and thus conserves the redox energy in a proton gradient. Cyanobacterial NDH-1 also plays a role in inorganic carbon-concentration. The polypeptide is NAD(P)H-quinone oxidoreductase subunit M (Prochlorococcus marinus subsp. pastoris (strain CCMP1986 / NIES-2087 / MED4)).